The sequence spans 399 residues: Elongation factor Tu (399 aa).

Residues 10-209 (KPHVNIGTIG…AVDDYIPTPV (200 aa)) enclose the tr-type G domain. A G1 region spans residues 19-26 (GHVDHGKT). 19 to 26 (GHVDHGKT) provides a ligand contact to GTP. Position 26 (threonine 26) interacts with Mg(2+). The segment at 62–66 (GITIN) is G2. The interval 83–86 (DCPG) is G3. Residues 83 to 87 (DCPGH) and 138 to 141 (NKCD) contribute to the GTP site. The segment at 138-141 (NKCD) is G4. The G5 stretch occupies residues 175–177 (SAY).

The protein belongs to the TRAFAC class translation factor GTPase superfamily. Classic translation factor GTPase family. EF-Tu/EF-1A subfamily. As to quaternary structure, monomer.

The protein resides in the cytoplasm. It catalyses the reaction GTP + H2O = GDP + phosphate + H(+). Functionally, GTP hydrolase that promotes the GTP-dependent binding of aminoacyl-tRNA to the A-site of ribosomes during protein biosynthesis. This Bifidobacterium longum (strain DJO10A) protein is Elongation factor Tu.